Consider the following 918-residue polypeptide: Melanoma-associated antigen E1 (918 aa).

Disordered stretches follow at residues 1–140 (MSLV…GSKA), 154–227 (EQRH…SNGL), and 367–388 (SQMSLAAEGPSASGMPTEANNP). A compositionally biased stretch (basic residues) spans 8–23 (SRRRRGGRANARRNNG). Composition is skewed to polar residues over residues 70 to 96 (VPPTASEGSSAPRQFIISQGPNTSEMP), 113 to 126 (GLNTAMSITASEGP), and 213 to 227 (EDPSTSVPPTDSNGL). MAGE domains are found at residues 459–658 (MEQN…YNEA) and 706–897 (LESK…YREA). The interval 704–918 (SRLESKARKL…RRPLIVRNLR (215 aa)) is interaction with DTNA.

Interacts with DTNA. Interacts with TRIM28. In terms of tissue distribution, expressed in cell bodies and dendrites of hippocampal and Purkinje neurons. Also expressed in peripheral nerve, where it localizes to the perineurium and myelin (at protein level). Predominantly expressed in brain and at low levels in the heart, liver, kidney, spleen, testis, lung, thymus, placenta and skeletal muscle.

The protein resides in the cytoplasm. The protein localises to the perinuclear region. It localises to the nucleus. It is found in the cell membrane. In terms of biological role, may enhance ubiquitin ligase activity of RING-type zinc finger-containing E3 ubiquitin-protein ligases. Proposed to act through recruitment and/or stabilization of the Ubl-conjugating enzyme (E2) at the E3:substrate complex. This Mus musculus (Mouse) protein is Melanoma-associated antigen E1 (Magee1).